The sequence spans 252 residues: Bridging integrator 3 homolog (252 aa).

The 224-residue stretch at 8–231 (GGPKKQIVPK…VDEVQLSDAE (224 aa)) folds into the BAR domain. 3 coiled-coil regions span residues 17 to 57 (KTVE…MSKS), 119 to 150 (SLNM…KDKT), and 224 to 244 (EVQL…AELR).

It localises to the cytoplasm. The protein localises to the cytoskeleton. Functionally, involved in cytokinesis and septation where it has a role in the localization of F-actin. The chain is Bridging integrator 3 homolog (bin3) from Xenopus laevis (African clawed frog).